The chain runs to 173 residues: Bifunctional protein PyrR (173 aa).

A PRPP-binding motif is present at residues 93–105 (VILVDDVLYTGRT).

It belongs to the purine/pyrimidine phosphoribosyltransferase family. PyrR subfamily. In terms of assembly, homodimer and homohexamer; in equilibrium.

The catalysed reaction is UMP + diphosphate = 5-phospho-alpha-D-ribose 1-diphosphate + uracil. Regulates transcriptional attenuation of the pyrimidine nucleotide (pyr) operon by binding in a uridine-dependent manner to specific sites on pyr mRNA. This disrupts an antiterminator hairpin in the RNA and favors formation of a downstream transcription terminator, leading to a reduced expression of downstream genes. In terms of biological role, also displays a weak uracil phosphoribosyltransferase activity which is not physiologically significant. This chain is Bifunctional protein PyrR, found in Streptococcus pneumoniae (strain 70585).